Consider the following 493-residue polypeptide: 3-octaprenyl-4-hydroxybenzoate carboxy-lyase (493 aa).

Residue Asn172 coordinates Mn(2+). Prenylated FMN is bound by residues 175 to 177 (IYR), 189 to 191 (RWL), and 194 to 195 (RG). Glu238 contacts Mn(2+). Asp287 (proton donor) is an active-site residue.

Belongs to the UbiD family. In terms of assembly, homohexamer. It depends on prenylated FMN as a cofactor. The cofactor is Mn(2+).

The protein resides in the cell membrane. The enzyme catalyses a 4-hydroxy-3-(all-trans-polyprenyl)benzoate + H(+) = a 2-(all-trans-polyprenyl)phenol + CO2. It participates in cofactor biosynthesis; ubiquinone biosynthesis. In terms of biological role, catalyzes the decarboxylation of 3-octaprenyl-4-hydroxy benzoate to 2-octaprenylphenol, an intermediate step in ubiquinone biosynthesis. This chain is 3-octaprenyl-4-hydroxybenzoate carboxy-lyase, found in Shewanella pealeana (strain ATCC 700345 / ANG-SQ1).